Consider the following 552-residue polypeptide: 2,3-bisphosphoglycerate-independent phosphoglycerate mutase (552 aa).

Positions 1 to 25 are enriched in polar residues; the sequence is MTNTQQQSESIDDNQAQLSKQQNSD. The tract at residues 1–30 is disordered; the sequence is MTNTQQQSESIDDNQAQLSKQQNSDNNKKV. Positions 38 and 88 each coordinate Mn(2+). The Phosphoserine intermediate role is filled by S88. Residues H149, 179-180, R217, R223, 293-296, and K373 each bind substrate; these read RD and RADR. Mn(2+) contacts are provided by D440, H444, D481, H482, and H500.

Belongs to the BPG-independent phosphoglycerate mutase family. In terms of assembly, monomer. The cofactor is Mn(2+).

The catalysed reaction is (2R)-2-phosphoglycerate = (2R)-3-phosphoglycerate. It functions in the pathway carbohydrate degradation; glycolysis; pyruvate from D-glyceraldehyde 3-phosphate: step 3/5. Catalyzes the interconversion of 2-phosphoglycerate and 3-phosphoglycerate. The sequence is that of 2,3-bisphosphoglycerate-independent phosphoglycerate mutase from Psychrobacter arcticus (strain DSM 17307 / VKM B-2377 / 273-4).